The primary structure comprises 1464 residues: Glutamate receptor ionotropic, NMDA 2A (1464 aa).

A signal peptide spans 1 to 22 (MGRVGYWTLLVLPALLVWRGPA). Over 23-556 (PSAAAEKGPP…SAFLEPFSAS (534 aa)) the chain is Extracellular. Residue histidine 44 coordinates Zn(2+). Asparagine 75 carries an N-linked (GlcNAc...) asparagine glycan. Cysteine 87 and cysteine 320 are joined by a disulfide. Zn(2+)-binding residues include histidine 128, glutamate 266, and aspartate 282. N-linked (GlcNAc...) asparagine glycans are attached at residues asparagine 340, asparagine 380, asparagine 443, and asparagine 444. 2 disulfides stabilise this stretch: cysteine 429/cysteine 455 and cysteine 436/cysteine 456. Residues serine 511, threonine 513, and arginine 518 each coordinate L-glutamate. A glycan (N-linked (GlcNAc...) asparagine) is linked at asparagine 541. The helical transmembrane segment at 557-576 (VWVMMFVMLLIVSAIAVFVF) threads the bilayer. At 577 to 600 (EYFSPVGYNRNLAKGKAPHGPSFT) the chain is on the cytoplasmic side. The pore-forming stretch occupies residues 599–620 (FTIGKAIWLLWGLVFNNSVPVQ). The discontinuously helical intramembrane region spans 601 to 615 (IGKAIWLLWGLVFNN). The Cytoplasmic segment spans residues 616 to 625 (SVPVQNPKGT). The helical transmembrane segment at 626 to 646 (TSKIMVSVWAFFAVIFLASYT) threads the bilayer. Residues 647 to 814 (ANLAAFMIQE…NEVMSSQLDI (168 aa)) lie on the Extracellular side of the membrane. N-linked (GlcNAc...) asparagine glycosylation occurs at asparagine 687. The L-glutamate site is built by serine 689, threonine 690, and aspartate 731. Cysteine 745 and cysteine 800 are joined by a disulfide. Residues 815 to 835 (DNMAGVFYMLAAAMALSLITF) form a helical membrane-spanning segment. Topologically, residues 836–1464 (IWEHLFYWKL…KKMPSIESDV (629 aa)) are cytoplasmic. Serine 882, serine 890, and serine 929 each carry phosphoserine. 2 stretches are compositionally biased toward polar residues: residues 1001-1010 (STESKVNSRP) and 1023-1032 (QDSLSQNPVS). Disordered regions lie at residues 1001-1088 (STES…NFKR) and 1148-1180 (PDPY…GLSN). Position 1025 is a phosphoserine (serine 1025). Basic and acidic residues-rich tracts occupy residues 1033 to 1043 (QRDEATAENRT) and 1052 to 1061 (LPEEMAHSDI). Phosphoserine occurs at positions 1059 and 1062. Basic and acidic residues predominate over residues 1070 to 1087 (CHREPDNSKNPKTKDNFK). Polar residues predominate over residues 1165–1180 (LPMNRNPLQNEEGLSN). A phosphoserine mark is found at serine 1198 and serine 1291. Residues 1335 to 1372 (KLSGKKSSLFPQGLEDSKRSKSLLPDHTSDNPFLHSHR) are disordered. Positions 1462–1464 (SDV) match the PDZ-binding motif.

Belongs to the glutamate-gated ion channel (TC 1.A.10.1) family. NR2A/GRIN2A subfamily. In terms of assembly, heterotetramer. Forms heterotetrameric channels composed of two GluN1/zeta subunits (GRIN1), and two identical GluN2/epsilon subunits (GRIN2A, GRIN2B, GRIN2C or GRIN2D) or GluN3 subunits (GRIN3A or GRIN3B) (in vitro). Can also form heterotetrameric channels that contain at least two GluN1 subunits and at least two different GluN2 subunits (or a combination of one GluN2 and one GluN3 subunits) (in vitro). In vivo, the subunit composition may depend on the expression levels of the different subunits. Found in a complex with GRIN1, GRIN3A and PPP2CB. Found in a complex with GRIN1 and GRIN3B. Interacts with AIP1. Interacts with HIP1 and NETO1. Interacts with SNX27 (via PDZ domain); the interaction is required for recycling to the plasma membrane when endocytosed and prevent degradation in lysosomes. Interacts with PDZ domains of PATJ and DLG4. Interacts with LRFN2. Interacts with RPH3A and DLG4; this ternary complex regulates NMDA receptor composition at postsynaptic membranes. Interacts with SORCS2. Interacts with ARC; preventing ARC oligomerization. Interacts (via the extreme C-terminus) with FRMPD2 (the second PDZ domain); the interaction is direct and is likely to promote NMDAR-mediated neural signal transmission. GRIN2A binds FRMPD2 with lower affinity than GRIN2B.

It is found in the cell projection. It localises to the dendritic spine. The protein resides in the cell membrane. The protein localises to the synapse. Its subcellular location is the postsynaptic cell membrane. It is found in the cytoplasmic vesicle membrane. The enzyme catalyses Ca(2+)(in) = Ca(2+)(out). It catalyses the reaction Na(+)(in) = Na(+)(out). The catalysed reaction is K(+)(in) = K(+)(out). Functionally, component of N-methyl-D-aspartate (NMDA) receptors (NMDARs) that function as heterotetrameric, ligand-gated cation channels with high calcium permeability and voltage-dependent block by Mg(2+). NMDARs participate in synaptic plasticity for learning and memory formation by contributing to the slow phase of excitatory postsynaptic current, long-term synaptic potentiation, and learning. Channel activation requires binding of the neurotransmitter L-glutamate to the GluN2 subunit, glycine or D-serine binding to the GluN1 subunit, plus membrane depolarization to eliminate channel inhibition by Mg(2+). NMDARs mediate simultaneously the potasium efflux and the influx of calcium and sodium. Each GluN2 subunit confers differential attributes to channel properties, including activation, deactivation and desensitization kinetics, pH sensitivity, Ca2(+) permeability, and binding to allosteric modulators. Participates in the synaptic plasticity regulation through activation by the L-glutamate releaseed by BEST1, into the synaptic cleft, upon F2R/PAR-1 activation in astrocyte. This is Glutamate receptor ionotropic, NMDA 2A from Pan troglodytes (Chimpanzee).